The following is a 321-amino-acid chain: Nodulation protein D 1 (321 aa).

The 58-residue stretch at 6–63 (LDLNLLVALDALMTERKLTAAARSINLSQPAMSAAITRLRTYFRDELFTMNGRELVPT) folds into the HTH lysR-type domain. The segment at residues 23 to 42 (LTAAARSINLSQPAMSAAIT) is a DNA-binding region (H-T-H motif).

The protein belongs to the LysR transcriptional regulatory family.

Its function is as follows. NodD regulates the expression of the nodABCFE genes which encode other nodulation proteins. NodD is also a negative regulator of its own expression. Binds flavonoids as inducers. In Bradyrhizobium japonicum, this protein is Nodulation protein D 1 (nodD1).